Consider the following 942-residue polypeptide: Apolipoprotein B receptor (942 aa).

Disordered regions lie at residues 66–212 (GLRS…VTED), 240–269 (ERMVPMRDGERARAQGTQCPGAESEDQAML), 283–487 (DSLG…SPER), 501–607 (AGPE…VPWE), and 671–942 (EGRG…PKPQ). Composition is skewed to basic and acidic residues over residues 106 to 123 (QAERQDTGSWKAAEDARG), 132 to 143 (PEAEPGTHRDRS), 240 to 252 (ERMVPMRDGERAR), 312 to 330 (EADKGDQQDEVDEKREAEV), and 338 to 352 (EAERTGEMTEGHIAE). The segment covering 353-370 (EEAMGEQETEGSFEDEER) has biased composition (acidic residues). At S364 the chain carries Phosphoserine. Basic and acidic residues predominate over residues 384–397 (EEVRAEESSREKRN). Residues 415-425 (PDWEDSPEVST) show a composition bias toward acidic residues. Composition is skewed to basic and acidic residues over residues 444-458 (LRVKVTEGQDPELVR) and 466-475 (QLEEGQKGQE). A phosphoserine mark is found at S484 and S520. Composition is skewed to basic and acidic residues over residues 514 to 531 (GVDRRNSQEVKADAEAGK) and 672 to 687 (GRGEAGRGTELEETTE). Over residues 709-721 (QEIDGTEEGEQAE) the composition is skewed to acidic residues. Residues 837 to 853 (SRLDVSVPRSRVLLSRS) are compositionally biased toward low complexity. The span at 854–863 (SSRRRSRPSF) shows a compositional bias: basic residues.

In terms of assembly, homodimer. Post-translationally, there are 2 forms in macrophages, the membrane-binding proteins 200 kDa (MBP 200) and 235 kDa (MBP 235), that can be reduced into a single active ligand-binding species with intermediate mobility (MBP 200R). Highly expressed in spleen, lung and skeletal muscle, and weakly in brain, heart, kidney, and testis.

It localises to the cell membrane. Functionally, macrophage receptor that binds to the apolipoprotein B48 (APOB) of dietary triglyceride (TG)-rich lipoproteins (TRL) or to a like domain of APOB in hypertriglyceridemic very low density lipoprotein (HTG-VLDL). Binds and internalizes TRL when out of the context of the macrophage. May provide essential lipids to reticuloendothelial cells. Could also be involved in foam cell formation with elevated TRL and remnant lipoprotein (RLP). Mediates the rapid high-affinity uptake of chylomicrons (CM), HTG-VLDL, and trypsinized (tryp) VLDL devoid of APOE in vitro in macrophages. This is Apolipoprotein B receptor from Mus musculus (Mouse).